Here is a 930-residue protein sequence, read N- to C-terminus: Endoplasmic reticulum aminopeptidase 1 (930 aa).

Residues M1–P2 are Cytoplasmic-facing. Residues S3–S23 form a helical; Signal-anchor for type II membrane protein membrane-spanning segment. At D24–L930 the chain is on the lumenal side. N59 and N143 each carry an N-linked (GlcNAc...) asparagine glycan. Residues E172 and G306–N310 each bind substrate. H342 serves as a coordination point for Zn(2+). E343 is a catalytic residue. 2 residues coordinate Zn(2+): H346 and E365. C393 and C432 are disulfide-bonded. 2 N-linked (GlcNAc...) asparagine glycosylation sites follow: N403 and N655. C725 and C732 are disulfide-bonded. N749 and N890 each carry an N-linked (GlcNAc...) asparagine glycan.

The protein belongs to the peptidase M1 family. Monomer. May also exist as a heterodimer; with ERAP2. Interacts with RBMX. Zn(2+) is required as a cofactor. In terms of processing, N-glycosylated.

The protein localises to the endoplasmic reticulum membrane. Functionally, aminopeptidase that plays a central role in peptide trimming, a step required for the generation of most HLA class I-binding peptides. Peptide trimming is essential to customize longer precursor peptides to fit them to the correct length required for presentation on MHC class I molecules. Strongly prefers substrates 9-16 residues long. Rapidly degrades 13-mer to a 9-mer and then stops. Preferentially hydrolyzes the residue Leu and peptides with a hydrophobic C-terminus, while it has weak activity toward peptides with charged C-terminus. May play a role in the inactivation of peptide hormones. May be involved in the regulation of blood pressure through the inactivation of angiotensin II and/or the generation of bradykinin in the kidney. This is Endoplasmic reticulum aminopeptidase 1 (Erap1) from Mus musculus (Mouse).